A 290-amino-acid chain; its full sequence is Dihydroorotate dehydrogenase B (NAD(+)), catalytic subunit (290 aa).

FMN-binding positions include Ser17 and 42–43; that span reads KT. Residues Lys42, 67–71, and Asn117 contribute to the substrate site; that span reads NAIGL. An FMN-binding site is contributed by Asn117. The active-site Nucleophile is Ser120. 2 residues coordinate FMN: Lys152 and Ile177. 178–179 is a substrate binding site; the sequence is NT. FMN-binding positions include Gly203, 229–230, and 251–252; these read GG and GT.

It belongs to the dihydroorotate dehydrogenase family. Type 1 subfamily. As to quaternary structure, heterotetramer of 2 PyrK and 2 PyrD type B subunits. The cofactor is FMN.

It localises to the cytoplasm. It carries out the reaction (S)-dihydroorotate + NAD(+) = orotate + NADH + H(+). The protein operates within pyrimidine metabolism; UMP biosynthesis via de novo pathway; orotate from (S)-dihydroorotate (NAD(+) route): step 1/1. Functionally, catalyzes the conversion of dihydroorotate to orotate with NAD(+) as electron acceptor. The protein is Dihydroorotate dehydrogenase B (NAD(+)), catalytic subunit (pyrD) of Saccharolobus solfataricus (strain ATCC 35092 / DSM 1617 / JCM 11322 / P2) (Sulfolobus solfataricus).